Reading from the N-terminus, the 335-residue chain is Foldase protein PrsA (335 aa).

The signal sequence occupies residues 1-20 (MKKKIFAGAVTLLSVAVLAA). C21 carries the N-palmitoyl cysteine lipid modification. Residue C21 is the site of S-diacylglycerol cysteine attachment. In terms of domain architecture, PpiC spans 142-239 (TPEVTAQIIK…ASYYIVKLVK (98 aa)). The segment at 300 to 335 (TGSSTSSSSAASSSKTSESSSAAESSSKEASSSAAE) is disordered. Positions 302 to 335 (SSTSSSSAASSSKTSESSSAAESSSKEASSSAAE) are enriched in low complexity.

This sequence belongs to the PrsA family.

It is found in the cell membrane. It catalyses the reaction [protein]-peptidylproline (omega=180) = [protein]-peptidylproline (omega=0). Plays a major role in protein secretion by helping the post-translocational extracellular folding of several secreted proteins. The protein is Foldase protein PrsA of Streptococcus sanguinis (strain SK36).